The sequence spans 434 residues: CCA tRNA nucleotidyltransferase 1, mitochondrial (434 aa).

The N-terminal 41 residues, 1–41 (MLRCLYHWHRPVLNRRWSRLCLPKQYLFTMKLQSPEFQSLF), are a transit peptide targeting the mitochondrion. The ATP site is built by glycine 64 and arginine 67. Positions 64 and 67 each coordinate CTP. Positions 77 and 79 each coordinate Mg(2+). ATP contacts are provided by arginine 151, aspartate 194, arginine 197, arginine 200, and arginine 203. Residues arginine 151, aspartate 194, arginine 197, arginine 200, and arginine 203 each coordinate CTP. Phosphoserine is present on serine 400. Lysine 402 is subject to N6-acetyllysine.

The protein belongs to the tRNA nucleotidyltransferase/poly(A) polymerase family. In terms of assembly, monomer, and homodimer; disulfide-linked. Mg(2+) serves as cofactor.

Its subcellular location is the mitochondrion. It is found in the cytoplasm. The protein localises to the nucleus. The catalysed reaction is a tRNA precursor + 2 CTP + ATP = a tRNA with a 3' CCA end + 3 diphosphate. The enzyme catalyses a tRNA with a 3' CCA end + 2 CTP + ATP = a tRNA with a 3' CCACCA end + 3 diphosphate. Functionally, nucleotidyltransferase that catalyzes the addition and repair of the essential 3'-terminal CCA sequence in tRNAs, which is necessary for the attachment of amino acids to the 3' terminus of tRNA molecules, using CTP and ATP as substrates. tRNA 3'-terminal CCA addition is required both for tRNA processing and repair. Promotes tRNA repair and recycling downstream of the ribosome-associated quality control (RQC) pathway by mediating addition of the tRNA 3'-terminal CCA following cleavage by ANKZF1 and repair by ELAC1. Also involved in tRNA surveillance by mediating tandem CCA addition to generate a CCACCA at the 3' terminus of unstable tRNAs and tRNA-like transcripts. While stable tRNAs receive only 3'-terminal CCA, unstable tRNAs beginning with GG are marked with CCACCA and rapidly degraded. The structural flexibility of RNA controls the choice between CCA versus CCACCA addition: following the first CCA addition cycle, nucleotide-binding to the active site triggers a clockwise screw motion, producing torque on the RNA. This ejects stable RNAs, whereas unstable RNAs are refolded while bound to the enzyme and subjected to a second CCA catalytic cycle. In terms of biological role, adds 2 C residues (CC-) to the 3' terminus of tRNA molecules instead of a complete CCA end as isoform 1 does (in vitro). In Homo sapiens (Human), this protein is CCA tRNA nucleotidyltransferase 1, mitochondrial.